Reading from the N-terminus, the 84-residue chain is Delta-thalatoxin-Tas1a (84 aa).

An N-terminal signal peptide occupies residues 1–19 (MAYLKIVLVALMLVLAVSA). Residues 20–33 (MRRPDQQDQDISVA) constitute a propeptide that is removed on maturation. Disulfide bonds link Cys-38–Cys-78, Cys-40–Cys-68, and Cys-61–Cys-79.

The protein belongs to the sea anemone sodium channel inhibitory toxin family. Type II subfamily.

It is found in the secreted. It localises to the nematocyst. In terms of biological role, binds specifically to the voltage-gated sodium channel (Nav) and delays its inactivation. This Thalassianthus aster (Fuzzy-tipped anemone) protein is Delta-thalatoxin-Tas1a.